The primary structure comprises 399 residues: Tryptophan synthase beta chain (399 aa).

Lys-92 bears the N6-(pyridoxal phosphate)lysine mark.

It belongs to the TrpB family. In terms of assembly, tetramer of two alpha and two beta chains. The cofactor is pyridoxal 5'-phosphate.

It catalyses the reaction (1S,2R)-1-C-(indol-3-yl)glycerol 3-phosphate + L-serine = D-glyceraldehyde 3-phosphate + L-tryptophan + H2O. It participates in amino-acid biosynthesis; L-tryptophan biosynthesis; L-tryptophan from chorismate: step 5/5. In terms of biological role, the beta subunit is responsible for the synthesis of L-tryptophan from indole and L-serine. The sequence is that of Tryptophan synthase beta chain from Legionella pneumophila (strain Corby).